The primary structure comprises 207 residues: Ribosomal RNA small subunit methyltransferase G (207 aa).

S-adenosyl-L-methionine is bound by residues glycine 75, phenylalanine 80, 126–127, and arginine 140; that span reads LE.

Belongs to the methyltransferase superfamily. RNA methyltransferase RsmG family.

The protein localises to the cytoplasm. The enzyme catalyses guanosine(527) in 16S rRNA + S-adenosyl-L-methionine = N(7)-methylguanosine(527) in 16S rRNA + S-adenosyl-L-homocysteine. Its function is as follows. Specifically methylates the N7 position of guanine in position 527 of 16S rRNA. This is Ribosomal RNA small subunit methyltransferase G from Erythrobacter litoralis (strain HTCC2594).